Here is a 457-residue protein sequence, read N- to C-terminus: Argininosuccinate lyase (457 aa).

The protein belongs to the lyase 1 family. Argininosuccinate lyase subfamily.

It is found in the cytoplasm. It carries out the reaction 2-(N(omega)-L-arginino)succinate = fumarate + L-arginine. It participates in amino-acid biosynthesis; L-arginine biosynthesis; L-arginine from L-ornithine and carbamoyl phosphate: step 3/3. This chain is Argininosuccinate lyase, found in Haemophilus influenzae (strain 86-028NP).